A 122-amino-acid chain; its full sequence is Large ribosomal subunit protein uL18 (122 aa).

This sequence belongs to the universal ribosomal protein uL18 family. Part of the 50S ribosomal subunit; part of the 5S rRNA/L5/L18/L25 subcomplex. Contacts the 5S and 23S rRNAs.

In terms of biological role, this is one of the proteins that bind and probably mediate the attachment of the 5S RNA into the large ribosomal subunit, where it forms part of the central protuberance. This chain is Large ribosomal subunit protein uL18, found in Desulforapulum autotrophicum (strain ATCC 43914 / DSM 3382 / VKM B-1955 / HRM2) (Desulfobacterium autotrophicum).